The sequence spans 235 residues: Pyridoxine 5'-phosphate synthase (235 aa).

Asn6 contributes to the 3-amino-2-oxopropyl phosphate binding site. 8–9 (DH) is a 1-deoxy-D-xylulose 5-phosphate binding site. Arg17 is a 3-amino-2-oxopropyl phosphate binding site. The active-site Proton acceptor is His42. Positions 44 and 49 each coordinate 1-deoxy-D-xylulose 5-phosphate. The active-site Proton acceptor is the Glu69. Thr99 lines the 1-deoxy-D-xylulose 5-phosphate pocket. His189 acts as the Proton donor in catalysis. Residues Gly190 and 211–212 (GH) contribute to the 3-amino-2-oxopropyl phosphate site.

The protein belongs to the PNP synthase family. In terms of assembly, homooctamer; tetramer of dimers.

The protein localises to the cytoplasm. It carries out the reaction 3-amino-2-oxopropyl phosphate + 1-deoxy-D-xylulose 5-phosphate = pyridoxine 5'-phosphate + phosphate + 2 H2O + H(+). It participates in cofactor biosynthesis; pyridoxine 5'-phosphate biosynthesis; pyridoxine 5'-phosphate from D-erythrose 4-phosphate: step 5/5. In terms of biological role, catalyzes the complicated ring closure reaction between the two acyclic compounds 1-deoxy-D-xylulose-5-phosphate (DXP) and 3-amino-2-oxopropyl phosphate (1-amino-acetone-3-phosphate or AAP) to form pyridoxine 5'-phosphate (PNP) and inorganic phosphate. This is Pyridoxine 5'-phosphate synthase from Chlorobium luteolum (strain DSM 273 / BCRC 81028 / 2530) (Pelodictyon luteolum).